A 399-amino-acid chain; its full sequence is Galactokinase (399 aa).

Residue 42–45 participates in substrate binding; the sequence is EHTD. ATP is bound by residues Ser76 and 133 to 139; that span reads ASGLSSS. 2 residues coordinate Mg(2+): Ser139 and Glu171. The Proton acceptor role is filled by Asp183. Tyr233 lines the substrate pocket.

The protein belongs to the GHMP kinase family. GalK subfamily. As to quaternary structure, monomer.

The protein resides in the cytoplasm. It carries out the reaction alpha-D-galactose + ATP = alpha-D-galactose 1-phosphate + ADP + H(+). It functions in the pathway carbohydrate metabolism; galactose metabolism. In terms of biological role, catalyzes the transfer of the gamma-phosphate of ATP to D-galactose to form alpha-D-galactose-1-phosphate (Gal-1-P). In Lactococcus lactis subsp. lactis (strain IL1403) (Streptococcus lactis), this protein is Galactokinase.